Here is a 1232-residue protein sequence, read N- to C-terminus: Chromosome-associated kinesin KIF4A (1232 aa).

The region spanning 9–336 (PVRVALRCRP…LRYADRARKI (328 aa)) is the Kinesin motor domain. 88 to 95 (GQTGSGKT) is an ATP binding site. The stretch at 350–999 (ELNHLKQQVQ…IKQKLTLLQV (650 aa)) forms a coiled coil. At serine 394 the chain carries Phosphoserine. A disordered region spans residues 496–515 (AQVETSPETSRSSDAFTTQH). The span at 497–515 (QVETSPETSRSSDAFTTQH) shows a compositional bias: polar residues. The tract at residues 663–1232 (QWKQKKDKEV…GCSPIEEEAH (570 aa)) is required for the interaction with PRC1. The short motif at 793-798 (PKLRRR) is the Nuclear localization signal element. At threonine 799 the chain carries Phosphothreonine. A phosphoserine mark is found at serine 801, serine 810, serine 815, and serine 951. Threonine 995 carries the post-translational modification Phosphothreonine. The segment at 1000–1232 (ASRQKHLPKD…GCSPIEEEAH (233 aa)) is globular. Phosphoserine occurs at positions 1001, 1013, 1017, 1028, and 1126. The segment at 1086 to 1144 (CSCKGWCGNKQCGCRKQKSDCGVDCCCDPTKCRNRQQGKDSLGTVERTQDSEGSFKLED) is CRD; required for [4Fe-4S] cluster binding and localization to the spindle midzone and midbody during anaphase and telophase. The disordered stretch occupies residues 1122–1142 (QGKDSLGTVERTQDSEGSFKL). Positions 1132–1142 (RTQDSEGSFKL) are enriched in basic and acidic residues. Residue threonine 1181 is modified to Phosphothreonine. Serine 1186 carries the post-translational modification Phosphoserine. Residue lysine 1194 forms a Glycyl lysine isopeptide (Lys-Gly) (interchain with G-Cter in SUMO2) linkage. Phosphoserine is present on serine 1225.

It belongs to the TRAFAC class myosin-kinesin ATPase superfamily. Kinesin family. Chromokinesin subfamily. In terms of assembly, interacts with the cytosolic iron-sulfur protein assembly (CIA) complex components CIAO2B and MMS19; the interactions facilitate the transfer of Fe-S clusters to KIF4A to ensure proper localization of KIF4A to mitotic machinery components. Interacts (via C-terminus) with unphosphorylated PRC1 (via N-terminus); the interaction is required for the progression of mitosis. [2Fe-2S] cluster serves as cofactor. Requires [4Fe-4S] cluster as cofactor. As to expression, highly expressed in hematopoietic tissues, fetal liver, spleen, thymus and adult thymus and bone marrow. Lower levels are found in heart, testis, kidney, colon and lung.

The protein localises to the nucleus matrix. The protein resides in the cytoplasm. Its subcellular location is the cytoskeleton. It is found in the spindle. It localises to the midbody. The protein localises to the chromosome. In terms of biological role, iron-sulfur (Fe-S) cluster binding motor protein that has a role in chromosome segregation during mitosis. Translocates PRC1 to the plus ends of interdigitating spindle microtubules during the metaphase to anaphase transition, an essential step for the formation of an organized central spindle midzone and midbody and for successful cytokinesis. May play a role in mitotic chromosomal positioning and bipolar spindle stabilization. The sequence is that of Chromosome-associated kinesin KIF4A (KIF4A) from Homo sapiens (Human).